We begin with the raw amino-acid sequence, 149 residues long: Arginine repressor (149 aa).

This sequence belongs to the ArgR family.

It is found in the cytoplasm. It participates in amino-acid biosynthesis; L-arginine biosynthesis [regulation]. Functionally, regulates arginine biosynthesis genes. In Bacillus pumilus (strain SAFR-032), this protein is Arginine repressor.